Consider the following 331-residue polypeptide: UAP56-interacting factor (331 aa).

The UAP56-binding motif motif lies at 16 to 34; the sequence is APDKVDMSLDDIIRLNKKE. Disordered regions lie at residues 30 to 51, 63 to 99, and 158 to 193; these read LNKKEQQARRPSPGNRRPLQKG, RARGQTQRGGGVPRGAITRAGVGRGRKIPPPVGRRRG, and GQRRPYRQTDIQRGLNSTRPFQQRRRPLPPVQTQRE. The span at 166 to 175 shows a compositional bias: polar residues; sequence TDIQRGLNST.

Belongs to the UIF family.

It is found in the nucleus. The protein resides in the nucleoplasm. The protein localises to the nucleus speckle. In terms of biological role, required for mRNA export from the nucleus to the cytoplasm. Acts as an adapter that uses the ddx39b/uap56-nfx1 pathway to ensure efficient mRNA export and delivering to the nuclear pore. In Salmo salar (Atlantic salmon), this protein is UAP56-interacting factor (fyttd1).